The chain runs to 227 residues: Lectin (227 aa).

The signal sequence occupies residues 1 to 28; it reads MTMTSTTTKAMAMAAAVLAAAAVAATNA. Glutamine 29 bears the Pyrrolidone carboxylic acid mark. Chitin-binding type-1 domains lie at 29–70, 71–113, 114–156, and 157–199; these read QTCG…ACCS, SQRC…PCRA, DIKC…ACCP, and EKRC…GCYK. Disulfide bonds link cysteine 31–cysteine 46, cysteine 40–cysteine 52, cysteine 45–cysteine 59, cysteine 63–cysteine 68, cysteine 74–cysteine 89, cysteine 83–cysteine 95, cysteine 88–cysteine 102, cysteine 106–cysteine 111, cysteine 117–cysteine 132, cysteine 126–cysteine 138, cysteine 131–cysteine 145, cysteine 149–cysteine 154, cysteine 160–cysteine 175, cysteine 169–cysteine 181, cysteine 174–cysteine 188, and cysteine 192–cysteine 197. 38 to 40 is a binding site for substrate; that stretch reads MIC. 90 to 101 serves as a coordination point for substrate; that stretch reads SQYGYCGFGSEY. Residue 142–143 participates in substrate binding; that stretch reads SE. The propeptide occupies 202 to 227; the sequence is DGMAAILANNQSVSFEGIIESVAELV. N-linked (GlcNAc...) asparagine glycosylation is present at asparagine 211.

In terms of tissue distribution, confined to root caps, several cell layers at the periphery of the coleorhiza and radicle, and in all cell layers of the coleoptile.

In terms of biological role, N-acetyl-D-glucosamine binding lectin. The polypeptide is Lectin (Oryza sativa subsp. japonica (Rice)).